The chain runs to 356 residues: Fructose-1,6-bisphosphatase class 1 (356 aa).

Mg(2+) contacts are provided by E91, D113, L115, and D116. Residues 116–119 (DGSS) and N208 each bind substrate. E280 contributes to the Mg(2+) binding site.

The protein belongs to the FBPase class 1 family. As to quaternary structure, homotetramer. Mg(2+) is required as a cofactor.

Its subcellular location is the cytoplasm. The enzyme catalyses beta-D-fructose 1,6-bisphosphate + H2O = beta-D-fructose 6-phosphate + phosphate. Its pathway is carbohydrate biosynthesis; gluconeogenesis. This chain is Fructose-1,6-bisphosphatase class 1, found in Methylacidiphilum infernorum (isolate V4) (Methylokorus infernorum (strain V4)).